The chain runs to 278 residues: Lectin 6 (278 aa).

An N-terminal signal peptide occupies residues 1–23; the sequence is MTLSSALIKIFITFLFLQNHVNS. 3 N-linked (GlcNAc...) asparagine glycosylation sites follow: Asn-116, Asn-139, and Asn-271.

It belongs to the leguminous lectin family.

Functionally, may be involved in arbuscular mycorrhizal (AM) symbiosis with AM fungi. This chain is Lectin 6, found in Medicago truncatula (Barrel medic).